The sequence spans 173 residues: Lipoprotein signal peptidase (173 aa).

4 consecutive transmembrane segments (helical) span residues 24-44 (PWLG…IAIL), 55-75 (ITGF…SFLA), 80-100 (WQRW…VWLL), and 105-125 (GQKL…GNVI). Active-site residues include D135 and D153. The chain crosses the membrane as a helical span at residues 145–165 (HWPAFNVADCGICIGAVLLII).

Belongs to the peptidase A8 family.

Its subcellular location is the cell inner membrane. The catalysed reaction is Release of signal peptides from bacterial membrane prolipoproteins. Hydrolyzes -Xaa-Yaa-Zaa-|-(S,diacylglyceryl)Cys-, in which Xaa is hydrophobic (preferably Leu), and Yaa (Ala or Ser) and Zaa (Gly or Ala) have small, neutral side chains.. The protein operates within protein modification; lipoprotein biosynthesis (signal peptide cleavage). In terms of biological role, this protein specifically catalyzes the removal of signal peptides from prolipoproteins. The sequence is that of Lipoprotein signal peptidase from Ralstonia nicotianae (strain ATCC BAA-1114 / GMI1000) (Ralstonia solanacearum).